The following is a 169-amino-acid chain: Putative pre-16S rRNA nuclease (169 aa).

A compositionally biased stretch (basic and acidic residues) spans 1–19; that stretch reads MTDSDHRLPDRPGEGDPGR. The disordered stretch occupies residues 1 to 22; sequence MTDSDHRLPDRPGEGDPGRGRR.

The protein belongs to the YqgF nuclease family.

It is found in the cytoplasm. Could be a nuclease involved in processing of the 5'-end of pre-16S rRNA. In Mycobacterium sp. (strain JLS), this protein is Putative pre-16S rRNA nuclease.